The primary structure comprises 425 residues: bZIP transcription factor RISBZ2 (425 aa).

2 disordered regions span residues 1 to 50 (MERV…GGGG) and 169 to 257 (NSIG…AAHL). Over residues 30-50 (QGGGGVASGGGGGVAGGGGGG) the composition is skewed to gly residues. A compositionally biased stretch (polar residues) spans 171–182 (IGGNATPVQNML). Residues 213 to 222 (SDDDDMEGEA) are compositionally biased toward acidic residues. A compositionally biased stretch (basic and acidic residues) spans 231-247 (ADQRLQRRKQSNRESAR). One can recognise a bZIP domain in the interval 232–295 (DQRLQRRKQS…NDAAVDNRVL (64 aa)). The interval 234 to 253 (RLQRRKQSNRESARRSRSRK) is basic motif. Residues 260–274 (LEAQVSQLRVENSSL) form a leucine-zipper region. Residues 334 to 354 (MPFNSSPSEATSDAAVPIQDD) form a disordered region.

In terms of assembly, heterodimer with RISBZ1/BZIP58.

Its subcellular location is the nucleus. Its function is as follows. Transcriptional activator that binds to the DNA specific sequence 5'-GCCACGT[AC]AG-3' found in the alpha-globulin gene promoter. Does not bind to promoters of other major storage genes such as glutelin, prolamin and albumin. Binds to the DNA specific sequence 5'-TGAGTCA-3' found in seed storage protein gene promoters. This Oryza sativa subsp. japonica (Rice) protein is bZIP transcription factor RISBZ2.